The chain runs to 456 residues: Elongator complex protein 4 (456 aa).

Basic and acidic residues predominate over residues 1 to 11; the sequence is MSFRKRGEILN. The tract at residues 1–91 is disordered; that stretch reads MSFRKRGEIL…SQPTTSTGSA (91 aa). Arginine 13 bears the Omega-N-methylarginine mark. A compositionally biased stretch (low complexity) spans 18-27; that stretch reads RGPLLRGPPR. Basic and acidic residues predominate over residues 57–66; sequence NIADESKTKM. Low complexity predominate over residues 77 to 90; sequence PSPATSQPTTSTGS. A Phosphoserine modification is found at serine 222. A disordered region spans residues 424 to 444; it reads EGSAASEQSHSHSHSDEISHN. The span at 432–442 shows a compositional bias: basic and acidic residues; the sequence is SHSHSHSDEIS.

The protein belongs to the ELP4 family. As to quaternary structure, component of the elongator complex which consists of ELP1/IKI3, ELP2, ELP3, ELP4, ELP5/IKI1 and ELP6. The elongator complex is composed of two copies of the Elp123 subcomplex (composed of ELP1/IKI3, ELP2 and ELP3) and two copies of the Elp456 subcomplex (composed of ELP4, ELP5/IKI1 and ELP6). The Elp123 subcomplex forms a two-lobed scaffold, which binds the Elp456 subcomplex asymmetrically. In each lobe, ELP2 is tightly sandwiched between ELP1/IKI3 and ELP3. The Elp123 subcomplex binds tRNA through ELP1/IKI3 and ELP3 and can bind 2 tRNAs simultaneously. tRNA-binding by the Elp123 subcomplex induces conformational rearrangements which precisely position the targeted anticodon base in the active site. The Elp456 subcomplex binds tRNA and has ATPase activity. ELP4 interacts with KTI12.

It is found in the cytoplasm. Its subcellular location is the nucleus. It functions in the pathway tRNA modification; 5-methoxycarbonylmethyl-2-thiouridine-tRNA biosynthesis. Functionally, component of the elongator complex, a multiprotein complex which is required for multiple tRNA modifications, including mcm5U (5-methoxycarbonylmethyl uridine), mcm5s2U (5-methoxycarbonylmethyl-2-thiouridine), and ncm5U (5-carbamoylmethyl uridine). The elongator complex catalyzes formation of carboxymethyluridine in the wobble base at position 34 in tRNAs. It functions as a gamma-toxin target (TOT); disruption of the complex confers resistance to Kluyveromyces lactis toxin zymocin (pGKL1 killer toxin). May also be involved in sensitivity to Pichia inositovora toxin. The sequence is that of Elongator complex protein 4 from Saccharomyces cerevisiae (strain ATCC 204508 / S288c) (Baker's yeast).